The following is a 144-amino-acid chain: Large ribosomal subunit protein uL11 (144 aa).

The protein belongs to the universal ribosomal protein uL11 family. Part of the ribosomal stalk of the 50S ribosomal subunit. Interacts with L10 and the large rRNA to form the base of the stalk. L10 forms an elongated spine to which L12 dimers bind in a sequential fashion forming a multimeric L10(L12)X complex. In terms of processing, one or more lysine residues are methylated.

In terms of biological role, forms part of the ribosomal stalk which helps the ribosome interact with GTP-bound translation factors. The polypeptide is Large ribosomal subunit protein uL11 (Polaromonas sp. (strain JS666 / ATCC BAA-500)).